The primary structure comprises 2217 residues: Protein irg-7 (2217 aa).

A signal peptide spans 1 to 16 (MRNWVLIAALAVICLA). 2 consecutive EGF-like domains span residues 370–405 (SGST…FHCQ) and 864–896 (TGTY…ESCE). 8 cysteine pairs are disulfide-bonded: Cys379/Cys393, Cys395/Cys404, Cys868/Cys873, Cys886/Cys895, Cys1212/Cys1312, Cys1285/Cys1304, Cys1508/Cys1521, and Cys1523/Cys1532. The region spanning 1188–1313 (IGQYCIKFMA…CAEPRAFACQ (126 aa)) is the C-type lectin domain. One can recognise an EGF-like 3 domain in the interval 1499 to 1533 (TGSRCTVPICVNGGTRNPDEATCSCPDGYEGPNCQ). The region spanning 2016–2202 (DVVFMIDGSQ…NNQIKTIQQL (187 aa)) is the VWFA domain.

It localises to the secreted. In terms of biological role, plays a role in innate immunity, probably via the atf-7 pathway, to confer resistance to pathogenic bacteria. May also play a role in the regulation of longevity. The polypeptide is Protein irg-7 (Caenorhabditis elegans).